We begin with the raw amino-acid sequence, 1423 residues long: DNA-directed RNA polymerase subunit beta' (1423 aa).

Cysteine 71, cysteine 73, cysteine 86, and cysteine 89 together coordinate Zn(2+). Mg(2+) contacts are provided by aspartate 461, aspartate 463, and aspartate 465. Zn(2+) is bound by residues cysteine 815, cysteine 889, cysteine 896, and cysteine 899.

Belongs to the RNA polymerase beta' chain family. As to quaternary structure, the RNAP catalytic core consists of 2 alpha, 1 beta, 1 beta' and 1 omega subunit. When a sigma factor is associated with the core the holoenzyme is formed, which can initiate transcription. The cofactor is Mg(2+). Zn(2+) is required as a cofactor.

The catalysed reaction is RNA(n) + a ribonucleoside 5'-triphosphate = RNA(n+1) + diphosphate. In terms of biological role, DNA-dependent RNA polymerase catalyzes the transcription of DNA into RNA using the four ribonucleoside triphosphates as substrates. The sequence is that of DNA-directed RNA polymerase subunit beta' from Actinobacillus pleuropneumoniae serotype 7 (strain AP76).